The primary structure comprises 538 residues: tRNA-2-methylthio-N(6)-dimethylallyladenosine synthase (538 aa).

Residues 1 to 23 (MNEEQRLGRNGNTDAVSTKEAGS) form a disordered region. Residues 95 to 213 (KKFLVRTYGC…LPHLLRNALF (119 aa)) form the MTTase N-terminal domain. 6 residues coordinate [4Fe-4S] cluster: Cys104, Cys140, Cys174, Cys250, Cys254, and Cys257. The 231-residue stretch at 236-466 (REGKTQAWVN…NALVNDISAQ (231 aa)) folds into the Radical SAM core domain. Positions 469–532 (LEYQDKVVEV…TWSLNGEMVE (64 aa)) constitute a TRAM domain.

The protein belongs to the methylthiotransferase family. MiaB subfamily. As to quaternary structure, monomer. The cofactor is [4Fe-4S] cluster.

It is found in the cytoplasm. It carries out the reaction N(6)-dimethylallyladenosine(37) in tRNA + (sulfur carrier)-SH + AH2 + 2 S-adenosyl-L-methionine = 2-methylsulfanyl-N(6)-dimethylallyladenosine(37) in tRNA + (sulfur carrier)-H + 5'-deoxyadenosine + L-methionine + A + S-adenosyl-L-homocysteine + 2 H(+). In terms of biological role, catalyzes the methylthiolation of N6-(dimethylallyl)adenosine (i(6)A), leading to the formation of 2-methylthio-N6-(dimethylallyl)adenosine (ms(2)i(6)A) at position 37 in tRNAs that read codons beginning with uridine. This is tRNA-2-methylthio-N(6)-dimethylallyladenosine synthase from Halalkalibacterium halodurans (strain ATCC BAA-125 / DSM 18197 / FERM 7344 / JCM 9153 / C-125) (Bacillus halodurans).